Consider the following 132-residue polypeptide: MSKTLNIIWQYLRAFVLIYACLYAGIFIASLLPVTIPGSIIGMLILFVLLALQILPAKWVNPGCYVLIRYMALLFVPIGVGVMQYFDLLRAQFGPVVVSCAISTLVVFLVVSWSSQLVHGERKVVGQKGSEE.

The Periplasmic portion of the chain corresponds to 1-6; that stretch reads MSKTLN. Residues 7-27 form a helical membrane-spanning segment; the sequence is IIWQYLRAFVLIYACLYAGIF. At 28–30 the chain is on the cytoplasmic side; that stretch reads IAS. Residues 31 to 51 traverse the membrane as a helical segment; that stretch reads LLPVTIPGSIIGMLILFVLLA. The Periplasmic segment spans residues 52-62; the sequence is LQILPAKWVNP. The helical transmembrane segment at 63–83 threads the bilayer; sequence GCYVLIRYMALLFVPIGVGVM. Over 84–92 the chain is Cytoplasmic; sequence QYFDLLRAQ. Residues 93 to 113 traverse the membrane as a helical segment; that stretch reads FGPVVVSCAISTLVVFLVVSW. Over 114–132 the chain is Periplasmic; it reads SSQLVHGERKVVGQKGSEE.

Belongs to the UPF0299 family.

It is found in the cell inner membrane. The chain is UPF0299 membrane protein YohJ (yohJ) from Escherichia coli O157:H7.